Consider the following 171-residue polypeptide: 3-hydroxydecanoyl-[acyl-carrier-protein] dehydratase (171 aa).

His-70 is a catalytic residue.

The protein belongs to the thioester dehydratase family. FabA subfamily. In terms of assembly, homodimer.

The protein resides in the cytoplasm. It carries out the reaction a (3R)-hydroxyacyl-[ACP] = a (2E)-enoyl-[ACP] + H2O. It catalyses the reaction (3R)-hydroxydecanoyl-[ACP] = (2E)-decenoyl-[ACP] + H2O. The catalysed reaction is (2E)-decenoyl-[ACP] = (3Z)-decenoyl-[ACP]. It participates in lipid metabolism; fatty acid biosynthesis. Its function is as follows. Necessary for the introduction of cis unsaturation into fatty acids. Catalyzes the dehydration of (3R)-3-hydroxydecanoyl-ACP to E-(2)-decenoyl-ACP and then its isomerization to Z-(3)-decenoyl-ACP. Can catalyze the dehydratase reaction for beta-hydroxyacyl-ACPs with saturated chain lengths up to 16:0, being most active on intermediate chain length. The sequence is that of 3-hydroxydecanoyl-[acyl-carrier-protein] dehydratase from Pseudomonas syringae pv. tomato (strain ATCC BAA-871 / DC3000).